The primary structure comprises 115 residues: Large ribosomal subunit protein bL19 (115 aa).

This sequence belongs to the bacterial ribosomal protein bL19 family.

This protein is located at the 30S-50S ribosomal subunit interface and may play a role in the structure and function of the aminoacyl-tRNA binding site. The protein is Large ribosomal subunit protein bL19 of Streptococcus pyogenes serotype M49 (strain NZ131).